The primary structure comprises 331 residues: Ribonuclease Z (331 aa).

Positions 56, 58, 60, 61, 162, 235, and 297 each coordinate Zn(2+). Catalysis depends on D60, which acts as the Proton acceptor.

This sequence belongs to the RNase Z family. Homodimer. It depends on Zn(2+) as a cofactor.

The catalysed reaction is Endonucleolytic cleavage of RNA, removing extra 3' nucleotides from tRNA precursor, generating 3' termini of tRNAs. A 3'-hydroxy group is left at the tRNA terminus and a 5'-phosphoryl group is left at the trailer molecule.. Zinc phosphodiesterase, which displays some tRNA 3'-processing endonuclease activity. Probably involved in tRNA maturation, by removing a 3'-trailer from precursor tRNA. The sequence is that of Ribonuclease Z (rnz) from Deinococcus radiodurans (strain ATCC 13939 / DSM 20539 / JCM 16871 / CCUG 27074 / LMG 4051 / NBRC 15346 / NCIMB 9279 / VKM B-1422 / R1).